The following is a 448-amino-acid chain: Ribosomal protein uS12 methylthiotransferase RimO (448 aa).

The region spanning 16 to 126 (PRISFVSLGC…VVAAVHEAVP (111 aa)) is the MTTase N-terminal domain. Residues Cys-25, Cys-61, Cys-90, Cys-157, Cys-161, and Cys-164 each coordinate [4Fe-4S] cluster. The region spanning 143–380 (LTPRHYAYLK…MEAQAGVSLK (238 aa)) is the Radical SAM core domain. The region spanning 383–448 (RAKVGKRLQV…DAYDLHGIAV (66 aa)) is the TRAM domain.

This sequence belongs to the methylthiotransferase family. RimO subfamily. [4Fe-4S] cluster is required as a cofactor.

It localises to the cytoplasm. The enzyme catalyses L-aspartate(89)-[ribosomal protein uS12]-hydrogen + (sulfur carrier)-SH + AH2 + 2 S-adenosyl-L-methionine = 3-methylsulfanyl-L-aspartate(89)-[ribosomal protein uS12]-hydrogen + (sulfur carrier)-H + 5'-deoxyadenosine + L-methionine + A + S-adenosyl-L-homocysteine + 2 H(+). Its function is as follows. Catalyzes the methylthiolation of an aspartic acid residue of ribosomal protein uS12. The chain is Ribosomal protein uS12 methylthiotransferase RimO from Methylorubrum populi (strain ATCC BAA-705 / NCIMB 13946 / BJ001) (Methylobacterium populi).